An 87-amino-acid chain; its full sequence is Large ribosomal subunit protein bL31B (87 aa).

Belongs to the bacterial ribosomal protein bL31 family. Type B subfamily. In terms of assembly, part of the 50S ribosomal subunit.

The sequence is that of Large ribosomal subunit protein bL31B from Corynebacterium kroppenstedtii (strain DSM 44385 / JCM 11950 / CIP 105744 / CCUG 35717).